We begin with the raw amino-acid sequence, 508 residues long: ATP synthase subunit alpha, chloroplastic (508 aa).

170 to 177 lines the ATP pocket; sequence GDRQTGKT.

It belongs to the ATPase alpha/beta chains family. As to quaternary structure, F-type ATPases have 2 components, CF(1) - the catalytic core - and CF(0) - the membrane proton channel. CF(1) has five subunits: alpha(3), beta(3), gamma(1), delta(1), epsilon(1). CF(0) has four main subunits: a, b, b' and c.

The protein resides in the plastid. It is found in the chloroplast thylakoid membrane. It catalyses the reaction ATP + H2O + 4 H(+)(in) = ADP + phosphate + 5 H(+)(out). Produces ATP from ADP in the presence of a proton gradient across the membrane. The alpha chain is a regulatory subunit. This chain is ATP synthase subunit alpha, chloroplastic, found in Lactuca sativa (Garden lettuce).